The primary structure comprises 129 residues: 3-aminoacrylate deaminase RutC (129 aa).

It belongs to the RutC family.

It carries out the reaction (Z)-3-aminoacrylate + H2O + H(+) = 3-oxopropanoate + NH4(+). Its function is as follows. Involved in pyrimidine catabolism. Catalyzes the deamination of 3-aminoacrylate to malonic semialdehyde, a reaction that can also occur spontaneously. RutC may facilitate the reaction and modulate the metabolic fitness, rather than catalyzing essential functions. This is 3-aminoacrylate deaminase RutC from Yersinia enterocolitica serotype O:8 / biotype 1B (strain NCTC 13174 / 8081).